Consider the following 621-residue polypeptide: Rab11 family-interacting protein 4A (621 aa).

2 consecutive EF-hand domains span residues 14 to 49 (AFLK…FGQG) and 47 to 82 (GQGD…IKGC). Residues Asp-27, Asp-29, Asp-31, Tyr-33, His-38, Asp-60, Asn-62, Arg-66, and Asp-71 each coordinate Ca(2+). Disordered regions lie at residues 132 to 172 (YSDE…KEEG) and 203 to 243 (DYGE…GQTP). Low complexity predominate over residues 151–161 (AADSGAGSESS). Residues 162–172 (EGGRQDDKEEG) show a composition bias toward basic and acidic residues. Polar residues predominate over residues 225-243 (TNGFSDLGSSLPSSAGQTP). A coiled-coil region spans residues 348 to 556 (DLKSKLKQEN…LNGQILSLSL (209 aa)). The region spanning 558 to 620 (EAKNLFACHT…DHNPSILEIK (63 aa)) is the FIP-RBD domain.

In terms of assembly, homodimer. Forms a complex with Rab11 (rab11a or rab11b) and arf6. In terms of tissue distribution, isoform 1 is predominantly expressed in neural tissues. Isoform B is expressed ubiquitously. In the developing retina, it is expressed in progenitors throughout the retina at early stages and becomes restricted to the ganglion cell layer and ciliary marginal zone as differentiation proceeds.

It localises to the recycling endosome membrane. The protein localises to the cleavage furrow. The protein resides in the midbody. Its subcellular location is the cytoplasmic vesicle. In terms of biological role, acts as a regulator of endocytic traffic by participating in membrane delivery. Required for the abscission step in cytokinesis, possibly by acting as an 'address tag' delivering recycling endosome membranes to the cleavage furrow during late cytokinesis. May play a role in differentiation during retinal development. In Danio rerio (Zebrafish), this protein is Rab11 family-interacting protein 4A (rab11fip4a).